We begin with the raw amino-acid sequence, 70 residues long: Adenylate kinase (70 aa).

An ATP-binding site is contributed by 10–15; sequence GAGKGT. The interval 30-59 is NMP; sequence STGDLFRANISKQTELGKLAKSYMDKGELV. AMP is bound by residues threonine 31, arginine 36, and 57 to 59; that span reads ELV.

This sequence belongs to the adenylate kinase family. Monomer.

Its subcellular location is the cytoplasm. It carries out the reaction AMP + ATP = 2 ADP. It participates in purine metabolism; AMP biosynthesis via salvage pathway; AMP from ADP: step 1/1. Functionally, catalyzes the reversible transfer of the terminal phosphate group between ATP and AMP. Plays an important role in cellular energy homeostasis and in adenine nucleotide metabolism. The chain is Adenylate kinase (adk) from Streptomyces scabiei.